A 335-amino-acid polypeptide reads, in one-letter code: Large ribosomal subunit protein uL3 (335 aa).

The tract at residues Met-1–Ala-20 is disordered.

It belongs to the universal ribosomal protein uL3 family. Part of the 50S ribosomal subunit. Forms a cluster with proteins L14 and L24e.

Functionally, one of the primary rRNA binding proteins, it binds directly near the 3'-end of the 23S rRNA, where it nucleates assembly of the 50S subunit. The sequence is that of Large ribosomal subunit protein uL3 from Methanothrix thermoacetophila (strain DSM 6194 / JCM 14653 / NBRC 101360 / PT) (Methanosaeta thermophila).